Reading from the N-terminus, the 473-residue chain is Protein AUXIN RESPONSE 4 (473 aa).

A compositionally biased stretch (acidic residues) spans 1-10; it reads MAIITEEEED. Residues 1-38 are disordered; that stretch reads MAIITEEEEDPKTLNPPKNKPKDSDFTKSESTMKNPKP. Over residues 29 to 38 the composition is skewed to polar residues; that stretch reads SESTMKNPKP. The helical transmembrane segment at 44–64 threads the bilayer; the sequence is FPFWFYFTVVVSLATIIFISL. In terms of domain architecture, AB hydrolase-1 spans 119–283; that stretch reads TVVIVHGLGL…DSSISPALPL (165 aa).

Most abundant in root tissue, lesser amounts in rosette leaves, stems and flowers and very little in mature siliques.

Its subcellular location is the endoplasmic reticulum membrane. Functionally, required for the auxin influx facilitator AUX1 polar trafficking and its asymmetric localization within the plasma membrane. Not involved in the PIN proteins localization. The polypeptide is Protein AUXIN RESPONSE 4 (AXR4) (Arabidopsis thaliana (Mouse-ear cress)).